A 54-amino-acid chain; its full sequence is MRFQPLFWVFFIFAMSLLFITEEKSVNFPRRRKLYRHNCFRRRCISLHSRVPFP.

A signal peptide spans 1-25 (MRFQPLFWVFFIFAMSLLFITEEKS).

The protein belongs to the Elabela/Toddler family. As to quaternary structure, interacts with APLNR.

Its subcellular location is the secreted. The protein localises to the extracellular space. In terms of biological role, peptide hormone that functions as endogenous ligand for the G-protein-coupled apelin receptor (APLNR/APJ), that plays a role in the regulation of normal cardiovascular function and fluid homeostasis. Functions as a balanced agonist activating both G(i) protein pathway and beta-arrestin pathway of APLNR. Downstream G proteins activation, apelin can inhibit cAMP production and activate key intracellular effectors such as ERKs. On the other hand, APLNR activation induces beta-arrestin recruitment to the membrane leading to desensitization and internalization of the receptor. Required for mesendodermal differentiation, blood vessels formation and heart morphogenesis during early development and for adult cardiovascular homeostasis. Acts as a motogen by promoting mesendodermal cell migration during gastrulation by binding and activating APLNR. Acts as an early embryonic regulator of cellular movement with a role in migration and development of cardiac progenitor cells. May act as a chemoattractant for the activation of angioblast migration toward the embryonic midline, i.e. the position of the future vessel formation, during vasculogenesis. Positively regulates sinus venosus (SV)-derived endothelial cells migration into the developing heart to promote coronary blood vessel sprouting. Plays a role in placental vascular development; promotes placental trophoblast invasion and spiral artery remodeling in the uterus. Involved in the regulation of maternal cardiovascular homeostasis to prevent gestational hypertension and for potent cardioprotective functions during heart failure. Mediates myocardial contractility in an ERK1/2-dependent manner. This Rattus norvegicus (Rat) protein is Apelin receptor early endogenous ligand.